A 188-amino-acid chain; its full sequence is Protein salivary glands marred (188 aa).

This sequence belongs to the TNFAIP8 family. Interacts with the Ste20-like MAP kinase msn.

The protein localises to the cytoplasm. Its subcellular location is the cytoskeleton. In terms of biological role, important for modulating JNK signaling, cytoskeletal remodeling and autophagy in larval salivary glands. During salivary gland development, involved in the positive regulation of the JNK signaling pathway, acting downstream of the TNF ligand egr and upstream of bsk. In Drosophila melanogaster (Fruit fly), this protein is Protein salivary glands marred.